The chain runs to 251 residues: tRNA1(Val) (adenine(37)-N6)-methyltransferase (251 aa).

This sequence belongs to the methyltransferase superfamily. tRNA (adenine-N(6)-)-methyltransferase family.

The protein localises to the cytoplasm. The catalysed reaction is adenosine(37) in tRNA1(Val) + S-adenosyl-L-methionine = N(6)-methyladenosine(37) in tRNA1(Val) + S-adenosyl-L-homocysteine + H(+). Its function is as follows. Specifically methylates the adenine in position 37 of tRNA(1)(Val) (anticodon cmo5UAC). This Shewanella frigidimarina (strain NCIMB 400) protein is tRNA1(Val) (adenine(37)-N6)-methyltransferase.